A 338-amino-acid chain; its full sequence is 1-aminocyclopropane-1-carboxylate deaminase (338 aa).

N6-(pyridoxal phosphate)lysine is present on Lys-51. Ser-78 acts as the Nucleophile in catalysis.

The protein belongs to the ACC deaminase/D-cysteine desulfhydrase family. In terms of assembly, homotrimer. The cofactor is pyridoxal 5'-phosphate.

The catalysed reaction is 1-aminocyclopropane-1-carboxylate + H2O = 2-oxobutanoate + NH4(+). Catalyzes a cyclopropane ring-opening reaction, the irreversible conversion of 1-aminocyclopropane-1-carboxylate (ACC) to ammonia and alpha-ketobutyrate. Allows growth on ACC as a nitrogen source. This is 1-aminocyclopropane-1-carboxylate deaminase from Paracidovorax citrulli (strain AAC00-1) (Acidovorax citrulli).